A 237-amino-acid polypeptide reads, in one-letter code: Ribose-5-phosphate isomerase A (237 aa).

Residues Ser29 to Thr32, Asp86 to Asp89, and Lys99 to Gly102 contribute to the substrate site. Glu108 serves as the catalytic Proton acceptor. Lys126 contacts substrate.

It belongs to the ribose 5-phosphate isomerase family. In terms of assembly, homodimer.

It carries out the reaction aldehydo-D-ribose 5-phosphate = D-ribulose 5-phosphate. The protein operates within carbohydrate degradation; pentose phosphate pathway; D-ribose 5-phosphate from D-ribulose 5-phosphate (non-oxidative stage): step 1/1. In terms of biological role, catalyzes the reversible conversion of ribose-5-phosphate to ribulose 5-phosphate. This is Ribose-5-phosphate isomerase A from Prochlorococcus marinus (strain MIT 9312).